The chain runs to 444 residues: Serine carboxypeptidase 2 (444 aa).

60-62 (NGG) serves as a coordination point for substrate. Disulfide bonds link Cys-65/Cys-324, Cys-222/Cys-234, and Cys-258/Cys-291. Asn-116 and Asn-127 each carry an N-linked (GlcNAc...) asparagine glycan. 157 to 159 (ESY) contributes to the substrate binding site. Ser-158 is an active-site residue. The N-linked (GlcNAc...) asparagine glycan is linked to Asn-259. The propeptide at 260–286 (ITSSSSSSSSSLSQQRRSRGRYPWLTG) is linker peptide. 2 N-linked (GlcNAc...) asparagine glycosylation sites follow: Asn-312 and Asn-318. Residues Asp-361 and His-413 contribute to the active site. 409-413 (RGAGH) is a binding site for substrate.

This sequence belongs to the peptidase S10 family. Carboxypeptidase II is a dimer, where each monomer is composed of two chains linked by a disulfide bond. N-glycosylated.

It catalyses the reaction Preferential release of a C-terminal arginine or lysine residue.. The sequence is that of Serine carboxypeptidase 2 (CBP2) from Triticum aestivum (Wheat).